Here is a 644-residue protein sequence, read N- to C-terminus: Macrolide export ATP-binding/permease protein MacB (644 aa).

Over Met1–Ser268 the chain is Cytoplasmic. The region spanning Ile4–Arg242 is the ABC transporter domain. Gly40–Ser47 contributes to the ATP binding site. Residues Leu269 to Gly289 traverse the membrane as a helical segment. Over Asn290–Ser523 the chain is Periplasmic. The helical transmembrane segment at Ile524 to Val544 threads the bilayer. The Cytoplasmic portion of the chain corresponds to Thr545–Val573. Residues Leu574–Phe594 traverse the membrane as a helical segment. Over Asn595–Thr607 the chain is Periplasmic. Residues Ala608 to Pro628 traverse the membrane as a helical segment. The Cytoplasmic segment spans residues Ala629–Glu644.

It belongs to the ABC transporter superfamily. Macrolide exporter (TC 3.A.1.122) family. As to quaternary structure, homodimer. Part of the tripartite efflux system MacAB-TdeA, which is composed of an inner membrane transporter, MacB, a periplasmic membrane fusion protein, MacA, and an outer membrane component, TdeA. The complex forms a large protein conduit and can translocate molecules across both the inner and outer membranes. Interacts with MacA.

The protein localises to the cell inner membrane. Functionally, part of the tripartite efflux system MacAB-TdeA. MacB is a non-canonical ABC transporter that contains transmembrane domains (TMD), which form a pore in the inner membrane, and an ATP-binding domain (NBD), which is responsible for energy generation. Confers resistance against macrolides. The sequence is that of Macrolide export ATP-binding/permease protein MacB from Aggregatibacter actinomycetemcomitans (Actinobacillus actinomycetemcomitans).